Reading from the N-terminus, the 780-residue chain is Pumilio domain-containing protein C4G8.03c (780 aa).

Disordered stretches follow at residues 1 to 29, 298 to 330, and 358 to 411; these read MVNRDAYNELNLNKKSQETNRKPSPLSSY, LSHFPDHLDPSRIPSPYQPSSLQPLESRKLHSK, and NHHS…GKTV. Positions 298 to 307 are enriched in basic and acidic residues; it reads LSHFPDHLDP. The span at 311 to 322 shows a compositional bias: low complexity; the sequence is PSPYQPSSLQPL. The span at 358–382 shows a compositional bias: polar residues; the sequence is NHHSSLSMDNDPTNVSTKNRNNQTV. Positions 435–778 constitute a PUM-HD domain; sequence EKSDDLSNLL…HILAKLTSST (344 aa). Pumilio repeat units follow at residues 462-497, 498-533, 534-569, 570-606, 607-642, 643-678, 679-714, 715-752, and 753-780; these read GFLGHLSTICKDQYGCRYLQKLLDENPKVNASLFFP, EIRQSVVQLMIDPFGNYMCQKLFVYASREQKLSMLN, GIGEGIVDICSNLYGTRSMQNIIDKLTSNEQISLLL, KIIIPSLTTLACDNNGTHVLQKCIAKFPPEKLEPLFL, SMEENLITLATNRHGCCILQRCLDRTNGDIQERLVN, SIIKSCLLLVQNAYGNYLVQHVLELNIQPYTERIIE, KFFGNICKLSLQKFSSNAIEQCIRTASPSTREQMLQ, EFLSFPNIEQLLDDCYANYVMQRFLNVADESQKFLILR, and SISHVIPKIQNTRHGRHILAKLTSSTSS.

The sequence is that of Pumilio domain-containing protein C4G8.03c from Schizosaccharomyces pombe (strain 972 / ATCC 24843) (Fission yeast).